The chain runs to 359 residues: Mannose-1-phosphate guanylyltransferase (359 aa).

This sequence belongs to the transferase hexapeptide repeat family.

The enzyme catalyses alpha-D-mannose 1-phosphate + GTP + H(+) = GDP-alpha-D-mannose + diphosphate. It functions in the pathway cell wall biogenesis. Its pathway is nucleotide-sugar biosynthesis; GDP-alpha-D-mannose biosynthesis; GDP-alpha-D-mannose from alpha-D-mannose 1-phosphate (GTP route): step 1/1. Catalyzes the formation of GDP-mannose from D-mannose-1-phosphate and GTP. Plays an important role in the synthesis of different glycoconjugates which are responsible for cell wall structure, virulence and immunomodulatory activity of M.tuberculosis. This Mycobacterium tuberculosis (strain ATCC 25618 / H37Rv) protein is Mannose-1-phosphate guanylyltransferase.